We begin with the raw amino-acid sequence, 367 residues long: Chorismate synthase (367 aa).

Residues 41 to 60 (FTHDLQRRASGKSRHTSARR) form a disordered region. Residues Arg48 and Arg54 each coordinate NADP(+). FMN-binding positions include 125 to 127 (RSS), 238 to 239 (NA), Gly278, 293 to 297 (KPTSS), and Arg319.

The protein belongs to the chorismate synthase family. In terms of assembly, homotetramer. FMNH2 serves as cofactor.

The catalysed reaction is 5-O-(1-carboxyvinyl)-3-phosphoshikimate = chorismate + phosphate. The protein operates within metabolic intermediate biosynthesis; chorismate biosynthesis; chorismate from D-erythrose 4-phosphate and phosphoenolpyruvate: step 7/7. Catalyzes the anti-1,4-elimination of the C-3 phosphate and the C-6 proR hydrogen from 5-enolpyruvylshikimate-3-phosphate (EPSP) to yield chorismate, which is the branch point compound that serves as the starting substrate for the three terminal pathways of aromatic amino acid biosynthesis. This reaction introduces a second double bond into the aromatic ring system. The chain is Chorismate synthase from Xanthomonas axonopodis pv. citri (strain 306).